A 623-amino-acid chain; its full sequence is Sterol O-acyltransferase 1 (623 aa).

Positions 20–99 (NSAEPSKRHS…EQAEEKYPVD (80 aa)) are disordered. A compositionally biased stretch (low complexity) spans 57 to 72 (ATTTATGVAVAAAAAA). Over residues 83-92 (DGDDEQDEQA) the composition is skewed to acidic residues. Transmembrane regions (helical) follow at residues 195–215 (LESN…WIAF), 242–262 (LFTI…VVFV), 277–297 (GFVA…PVYV), 384–404 (ISCS…QINY), and 422–442 (IMGT…PVAM). The FYXDWWN motif signature appears at 504 to 510 (FYGDWWN). 2 helical membrane passes run 548–568 (ATLF…FAIF) and 603–623 (VVFT…YLTL). The active site involves histidine 560.

This sequence belongs to the membrane-bound acyltransferase family. Sterol o-acyltransferase subfamily.

Its subcellular location is the endoplasmic reticulum membrane. Functionally, sterol O-acyltransferase that catalyzes the formation of stery esters. The polypeptide is Sterol O-acyltransferase 1 (ARE1) (Saccharomyces uvarum (strain ATCC 76518 / CBS 7001 / CLIB 283 / NBRC 10550 / MCYC 623 / NCYC 2669 / NRRL Y-11845) (Yeast)).